Here is a 323-residue protein sequence, read N- to C-terminus: tRNA U34 carboxymethyltransferase (323 aa).

Carboxy-S-adenosyl-L-methionine-binding positions include Lys91, Trp105, Lys110, Gly130, 181 to 182 (IE), Met196, Tyr200, and Arg315.

It belongs to the class I-like SAM-binding methyltransferase superfamily. CmoB family. Homotetramer.

It catalyses the reaction carboxy-S-adenosyl-L-methionine + 5-hydroxyuridine(34) in tRNA = 5-carboxymethoxyuridine(34) in tRNA + S-adenosyl-L-homocysteine + H(+). In terms of biological role, catalyzes carboxymethyl transfer from carboxy-S-adenosyl-L-methionine (Cx-SAM) to 5-hydroxyuridine (ho5U) to form 5-carboxymethoxyuridine (cmo5U) at position 34 in tRNAs. The polypeptide is tRNA U34 carboxymethyltransferase (Sodalis glossinidius (strain morsitans)).